The chain runs to 274 residues: Ethanolamine ammonia-lyase small subunit (274 aa).

Positions 161, 182, and 211 each coordinate adenosylcob(III)alamin.

This sequence belongs to the EutC family. In terms of assembly, the basic unit is a heterodimer which dimerizes to form tetramers. The heterotetramers trimerize; 6 large subunits form a core ring with 6 small subunits projecting outwards. Adenosylcob(III)alamin serves as cofactor.

The protein resides in the bacterial microcompartment. It catalyses the reaction ethanolamine = acetaldehyde + NH4(+). It participates in amine and polyamine degradation; ethanolamine degradation. Catalyzes the deamination of various vicinal amino-alcohols to oxo compounds. Allows this organism to utilize ethanolamine as the sole source of nitrogen and carbon in the presence of external vitamin B12. The protein is Ethanolamine ammonia-lyase small subunit of Pseudomonas fluorescens (strain ATCC BAA-477 / NRRL B-23932 / Pf-5).